A 297-amino-acid chain; its full sequence is Coatomer subunit epsilon-2 (297 aa).

This sequence belongs to the COPE family. Oligomeric complex that consists of at least the alpha, beta, beta', gamma, delta, epsilon and zeta subunits.

It localises to the cytoplasm. The protein resides in the golgi apparatus membrane. It is found in the cytoplasmic vesicle. The protein localises to the COPI-coated vesicle membrane. In terms of biological role, the coatomer is a cytosolic protein complex that binds to dilysine motifs and reversibly associates with Golgi non-clathrin-coated vesicles, which further mediate biosynthetic protein transport from the ER, via the Golgi up to the trans Golgi network. The coatomer complex is required for budding from Golgi membranes, and is essential for the retrograde Golgi-to-ER transport of dilysine-tagged proteins. The protein is Coatomer subunit epsilon-2 of Oryza sativa subsp. japonica (Rice).